We begin with the raw amino-acid sequence, 338 residues long: 4-hydroxythreonine-4-phosphate dehydrogenase (338 aa).

Histidine 139 and threonine 140 together coordinate substrate. Residues histidine 169, histidine 214, and histidine 270 each coordinate a divalent metal cation. Residues lysine 278, asparagine 287, and arginine 296 each contribute to the substrate site.

This sequence belongs to the PdxA family. Homodimer. The cofactor is Zn(2+). Mg(2+) serves as cofactor. Requires Co(2+) as cofactor.

It localises to the cytoplasm. It catalyses the reaction 4-(phosphooxy)-L-threonine + NAD(+) = 3-amino-2-oxopropyl phosphate + CO2 + NADH. The protein operates within cofactor biosynthesis; pyridoxine 5'-phosphate biosynthesis; pyridoxine 5'-phosphate from D-erythrose 4-phosphate: step 4/5. In terms of biological role, catalyzes the NAD(P)-dependent oxidation of 4-(phosphooxy)-L-threonine (HTP) into 2-amino-3-oxo-4-(phosphooxy)butyric acid which spontaneously decarboxylates to form 3-amino-2-oxopropyl phosphate (AHAP). The sequence is that of 4-hydroxythreonine-4-phosphate dehydrogenase from Desulfosudis oleivorans (strain DSM 6200 / JCM 39069 / Hxd3) (Desulfococcus oleovorans).